Consider the following 513-residue polypeptide: 2,3-bisphosphoglycerate-independent phosphoglycerate mutase (513 aa).

D13 and S63 together coordinate Mn(2+). The active-site Phosphoserine intermediate is S63. Substrate contacts are provided by residues H124, 154-155 (RD), R186, R192, 262-265 (RADR), and K335. 5 residues coordinate Mn(2+): D402, H406, D443, H444, and H462.

Belongs to the BPG-independent phosphoglycerate mutase family. Monomer. Mn(2+) is required as a cofactor.

The catalysed reaction is (2R)-2-phosphoglycerate = (2R)-3-phosphoglycerate. It participates in carbohydrate degradation; glycolysis; pyruvate from D-glyceraldehyde 3-phosphate: step 3/5. Catalyzes the interconversion of 2-phosphoglycerate and 3-phosphoglycerate. This is 2,3-bisphosphoglycerate-independent phosphoglycerate mutase from Shewanella frigidimarina (strain NCIMB 400).